Reading from the N-terminus, the 1013-residue chain is Receptor-type tyrosine-protein phosphatase N2 (1013 aa).

An N-terminal signal peptide occupies residues 1–19; that stretch reads MALPLLLLLLLLLPPRVLP. Residues 1 to 419 are involved in localization to secretory granules; interaction with CPE; it reads MALPLLLLLL…PGALPFAKPL (419 aa). The Extracellular portion of the chain corresponds to 20 to 613; it reads AAPSSVPHGR…QAEQEDSTKF (594 aa). 4 disordered regions span residues 116–137, 273–302, 342–382, and 401–487; these read RHPE…ERRY, MPRP…TGEG, DHRG…VQDD, and LQDH…SLPA. Positions 419-430 are enriched in basic and acidic residues; the sequence is LKMERKKSERPE. Ser434 and Ser435 each carry phosphoserine. Asn562 carries N-linked (GlcNAc...) asparagine glycosylation. The helical transmembrane segment at 614–634 threads the bilayer; sequence IALTLVSLACILGVLLASGLI. Over 635–1013 the chain is Cytoplasmic; sequence YCLRHSSQHR…VNAILKALPQ (379 aa). Positions 664-673 match the Tyrosine-based internalization motif motif; the sequence is YQELCRQRMA. A disordered region spans residues 673-717; that stretch reads ATRPPDRPEGPHTSRISSVSSQFSDGPMPSPSARSSASSWSEEPV. Polar residues predominate over residues 686-696; that stretch reads SRISSVSSQFS. Ser690 and Ser696 each carry phosphoserine. The segment covering 703–717 has biased composition (low complexity); that stretch reads PSARSSASSWSEEPV. The 261-residue stretch at 743-1003 folds into the Tyrosine-protein phosphatase domain; sequence LEKEWEALCA…EFALTAVAEE (261 aa). Substrate contacts are provided by residues Asp911 and 943–949; that span reads CSDGAGR. Cys943 serves as the catalytic Phosphocysteine intermediate. Position 968 is an N6-acetyllysine (Lys968). Gln988 is a binding site for substrate. The Leucine-based sorting signal signature appears at 1002–1008; the sequence is EEVNAIL.

It belongs to the protein-tyrosine phosphatase family. Receptor class 8 subfamily. As to quaternary structure, self-associates. Interacts (via cytoplasmic domain) with PTPRN (via cytoplasmic domain). Interacts (precursor form) with CPE. Interacts with HAP1. Interacts with AP2A1 or AP2A2 and AP1G1; indicative for an association with adaptor protein complex 2 (AP-2) and adaptor protein complex 1 (AP-1). Interacts with AP2M1; indicative for an association with adaptor protein complex 2 (AP-2). Interacts with MYO5A. In terms of processing, subject to proteolytic cleavage at multiple sites. In terms of tissue distribution, detected in pancreatic islets and adrenal medulla.

The protein resides in the cytoplasmic vesicle. It is found in the secretory vesicle membrane. Its subcellular location is the secretory vesicle. The protein localises to the synaptic vesicle membrane. The catalysed reaction is O-phospho-L-tyrosyl-[protein] + H2O = L-tyrosyl-[protein] + phosphate. Its function is as follows. Plays a role in vesicle-mediated secretory processes. Required for normal accumulation of secretory vesicles in hippocampus, pituitary and pancreatic islets. Required for the accumulation of normal levels of insulin-containing vesicles and preventing their degradation. Plays a role in insulin secretion in response to glucose stimuli. Required for normal accumulation of the neurotransmitters norepinephrine, dopamine and serotonin in the brain. In females, but not in males, required for normal accumulation and secretion of pituitary hormones, such as luteinizing hormone (LH) and follicle-stimulating hormone (FSH). Required to maintain normal levels of renin expression and renin release. May regulate catalytic active protein-tyrosine phosphatases such as PTPRA through dimerization. Has phosphatidylinositol phosphatase activity; the PIPase activity is involved in its ability to regulate insulin secretion. Can dephosphorylate phosphatidylinositol 4,5-biphosphate, phosphatidylinositol 5-phosphate and phosphatidylinositol 3-phosphate. Regulates PI(4,5)P2 level in the plasma membrane and localization of cofilin at the plasma membrane and thus is indirectly involved in regulation of actin dynamics related to cell migration and metastasis; upon hydrolysis of PI(4,5)P2 cofilin is released from the plasma membrane and acts in the cytoplasm in severing F-actin filaments. The sequence is that of Receptor-type tyrosine-protein phosphatase N2 (PTPRN2) from Macaca nemestrina (Pig-tailed macaque).